We begin with the raw amino-acid sequence, 253 residues long: tRNA (guanine-N(1)-)-methyltransferase (253 aa).

S-adenosyl-L-methionine-binding positions include Gly-111 and 131 to 136; that span reads LGDFVL.

It belongs to the RNA methyltransferase TrmD family. As to quaternary structure, homodimer.

The protein resides in the cytoplasm. The enzyme catalyses guanosine(37) in tRNA + S-adenosyl-L-methionine = N(1)-methylguanosine(37) in tRNA + S-adenosyl-L-homocysteine + H(+). Functionally, specifically methylates guanosine-37 in various tRNAs. This is tRNA (guanine-N(1)-)-methyltransferase from Synechococcus sp. (strain JA-3-3Ab) (Cyanobacteria bacterium Yellowstone A-Prime).